The chain runs to 489 residues: Bypass of stop codon protein 5 (489 aa).

Residues 1–42 (MQESKEPQNKFEGCQRISSSSSTLFGGTSFEEPRCGTSQGKE) are disordered. The span at 18 to 30 (SSSSSTLFGGTSF) shows a compositional bias: low complexity. Phosphoserine occurs at positions 111 and 350.

This sequence belongs to the BUL1 family.

In terms of biological role, appears to play a role in translation fidelity, and may act when translation is compromised. May be a component of the ubiquitination pathway. The protein is Bypass of stop codon protein 5 (BSC5) of Saccharomyces cerevisiae (strain ATCC 204508 / S288c) (Baker's yeast).